The sequence spans 416 residues: Serine hydroxymethyltransferase (416 aa).

Residues Leu-121 and 125 to 127 each bind (6S)-5,6,7,8-tetrahydrofolate; that span reads GHL. The residue at position 229 (Lys-229) is an N6-(pyridoxal phosphate)lysine. (6S)-5,6,7,8-tetrahydrofolate-binding positions include Glu-245 and 354–356; that span reads SPF.

Belongs to the SHMT family. As to quaternary structure, homodimer. Pyridoxal 5'-phosphate serves as cofactor.

It localises to the cytoplasm. The catalysed reaction is (6R)-5,10-methylene-5,6,7,8-tetrahydrofolate + glycine + H2O = (6S)-5,6,7,8-tetrahydrofolate + L-serine. The protein operates within one-carbon metabolism; tetrahydrofolate interconversion. It participates in amino-acid biosynthesis; glycine biosynthesis; glycine from L-serine: step 1/1. In terms of biological role, catalyzes the reversible interconversion of serine and glycine with tetrahydrofolate (THF) serving as the one-carbon carrier. This reaction serves as the major source of one-carbon groups required for the biosynthesis of purines, thymidylate, methionine, and other important biomolecules. Also exhibits THF-independent aldolase activity toward beta-hydroxyamino acids, producing glycine and aldehydes, via a retro-aldol mechanism. The protein is Serine hydroxymethyltransferase of Aliivibrio salmonicida (strain LFI1238) (Vibrio salmonicida (strain LFI1238)).